A 135-amino-acid chain; its full sequence is Integration host factor subunit beta (135 aa).

Residues 83 to 92 (GKELRERVDR) show a composition bias toward basic and acidic residues. Positions 83-135 (GKELRERVDRTVTQGGGMNGNGHAPHGKTGQSQLGSQSPASLHDDGQLNLVRS) are disordered. Positions 111–122 (TGQSQLGSQSPA) are enriched in polar residues.

It belongs to the bacterial histone-like protein family. As to quaternary structure, heterodimer of an alpha and a beta chain.

This protein is one of the two subunits of integration host factor, a specific DNA-binding protein that functions in genetic recombination as well as in transcriptional and translational control. The sequence is that of Integration host factor subunit beta from Cupriavidus metallidurans (strain ATCC 43123 / DSM 2839 / NBRC 102507 / CH34) (Ralstonia metallidurans).